We begin with the raw amino-acid sequence, 503 residues long: Maturase K (503 aa).

Belongs to the intron maturase 2 family. MatK subfamily.

It is found in the plastid. It localises to the chloroplast. Functionally, usually encoded in the trnK tRNA gene intron. Probably assists in splicing its own and other chloroplast group II introns. This Silene latifolia (White campion) protein is Maturase K.